The sequence spans 1297 residues: Phosphoribosylformylglycinamidine synthase (1297 aa).

ATP-binding positions include 307–318 (GASTGSGGEIRD) and alanine 678. Residues glutamate 718, asparagine 722, and aspartate 886 each contribute to the Mg(2+) site. The 254-residue stretch at 1044–1297 (MAILREQGVN…MFQNARKNLG (254 aa)) folds into the Glutamine amidotransferase type-1 domain. Cysteine 1137 (nucleophile) is an active-site residue. Residues histidine 1262 and glutamate 1264 contribute to the active site.

The protein in the N-terminal section; belongs to the FGAMS family. Monomer.

It is found in the cytoplasm. The catalysed reaction is N(2)-formyl-N(1)-(5-phospho-beta-D-ribosyl)glycinamide + L-glutamine + ATP + H2O = 2-formamido-N(1)-(5-O-phospho-beta-D-ribosyl)acetamidine + L-glutamate + ADP + phosphate + H(+). It participates in purine metabolism; IMP biosynthesis via de novo pathway; 5-amino-1-(5-phospho-D-ribosyl)imidazole from N(2)-formyl-N(1)-(5-phospho-D-ribosyl)glycinamide: step 1/2. Phosphoribosylformylglycinamidine synthase involved in the purines biosynthetic pathway. Catalyzes the ATP-dependent conversion of formylglycinamide ribonucleotide (FGAR) and glutamine to yield formylglycinamidine ribonucleotide (FGAM) and glutamate. The protein is Phosphoribosylformylglycinamidine synthase of Vibrio vulnificus (strain CMCP6).